The primary structure comprises 74 residues: Lambda-hexatoxin-Hv1e (74 aa).

The signal sequence occupies residues 1 to 22 (MNTATCFIVLLVVATVIGGIEA). The propeptide occupies 23–35 (GEFDMRKDVMGLF). 4 cysteine pairs are disulfide-bonded: Cys40/Cys54, Cys47/Cys59, Cys50/Cys51, and Cys53/Cys69.

This sequence belongs to the neurotoxin 11 (kappa toxin) family. As to expression, expressed by the venom gland.

The protein localises to the secreted. Functionally, this excitatory toxin inhibits insect calcium-activated potassium (KCa) channels (Slo-type). This chain is Lambda-hexatoxin-Hv1e, found in Hadronyche versuta (Blue mountains funnel-web spider).